The primary structure comprises 491 residues: Probable malate:quinone oxidoreductase (491 aa).

This sequence belongs to the MQO family. The cofactor is FAD.

It carries out the reaction (S)-malate + a quinone = a quinol + oxaloacetate. It participates in carbohydrate metabolism; tricarboxylic acid cycle; oxaloacetate from (S)-malate (quinone route): step 1/1. This Actinobacillus pleuropneumoniae serotype 5b (strain L20) protein is Probable malate:quinone oxidoreductase.